Here is a 112-residue protein sequence, read N- to C-terminus: uncharacterized protein (112 aa).

Positions 1 to 11 (MAESVASSESL) are enriched in polar residues. Residues 1-32 (MAESVASSESLPQMKPEEPESKKSPSREAIPK) form a disordered region. A compositionally biased stretch (basic and acidic residues) spans 15-31 (KPEEPESKKSPSREAIP). Residues 81-101 (VVFIFMIAIMSMLVIGLVVCG) form a helical membrane-spanning segment.

The protein localises to the membrane. This is an uncharacterized protein from Encephalitozoon cuniculi (strain GB-M1) (Microsporidian parasite).